We begin with the raw amino-acid sequence, 247 residues long: Cytochrome c oxidase subunit 2 (247 aa).

The first 11 residues, 1–11 (MLLIINNIINN), serve as a signal peptide directing secretion. The Mitochondrial intermembrane portion of the chain corresponds to 12-38 (DVPTPWGVYFQDSATPNHEGIIELHDN). The chain crosses the membrane as a helical span at residues 39–59 (IMFYLVLILCLVSWLLFSIVK). At 60-78 (DGSKNPLPHKYLVHGQTIE) the chain is on the mitochondrial matrix side. Residues 79 to 101 (IIWTILPALVLLVIAFPSFILLY) traverse the membrane as a helical segment. Topologically, residues 102 to 247 (LCDEVISPAM…KEFLTWLNEQ (146 aa)) are mitochondrial intermembrane. Residues H182, C217, E219, C221, H225, and M228 each coordinate Cu cation. E219 contacts Mg(2+).

Belongs to the cytochrome c oxidase subunit 2 family. In terms of assembly, component of the cytochrome c oxidase (complex IV, CIV), a multisubunit enzyme composed of a catalytic core of 3 subunits and several supernumerary subunits. The complex exists as a monomer or a dimer and forms supercomplexes (SCs) in the inner mitochondrial membrane with ubiquinol-cytochrome c oxidoreductase (cytochrome b-c1 complex, complex III, CIII). Cu cation serves as cofactor. The signal sequence of COX2 is processed by IMP1.

It is found in the mitochondrion inner membrane. It carries out the reaction 4 Fe(II)-[cytochrome c] + O2 + 8 H(+)(in) = 4 Fe(III)-[cytochrome c] + 2 H2O + 4 H(+)(out). Component of the cytochrome c oxidase, the last enzyme in the mitochondrial electron transport chain which drives oxidative phosphorylation. The respiratory chain contains 3 multisubunit complexes succinate dehydrogenase (complex II, CII), ubiquinol-cytochrome c oxidoreductase (cytochrome b-c1 complex, complex III, CIII) and cytochrome c oxidase (complex IV, CIV), that cooperate to transfer electrons derived from NADH and succinate to molecular oxygen, creating an electrochemical gradient over the inner membrane that drives transmembrane transport and the ATP synthase. Cytochrome c oxidase is the component of the respiratory chain that catalyzes the reduction of oxygen to water. Electrons originating from reduced cytochrome c in the intermembrane space (IMS) are transferred via the dinuclear copper A center (CU(A)) of subunit 2 and heme A of subunit 1 to the active site in subunit 1, a binuclear center (BNC) formed by heme A3 and copper B (CU(B)). The BNC reduces molecular oxygen to 2 water molecules using 4 electrons from cytochrome c in the IMS and 4 protons from the mitochondrial matrix. This Wickerhamomyces canadensis (Yeast) protein is Cytochrome c oxidase subunit 2 (COX2).